The following is a 336-amino-acid chain: Anthranilate phosphoribosyltransferase (336 aa).

Residues G79, 82–83 (GD), T87, 89–92 (NIST), 107–115 (KHGNRCVSS), and A119 contribute to the 5-phospho-alpha-D-ribose 1-diphosphate site. G79 contacts anthranilate. S91 contributes to the Mg(2+) binding site. Residue N110 participates in anthranilate binding. R165 is an anthranilate binding site. Positions 224 and 225 each coordinate Mg(2+).

This sequence belongs to the anthranilate phosphoribosyltransferase family. In terms of assembly, homodimer. Requires Mg(2+) as cofactor.

The enzyme catalyses N-(5-phospho-beta-D-ribosyl)anthranilate + diphosphate = 5-phospho-alpha-D-ribose 1-diphosphate + anthranilate. It functions in the pathway amino-acid biosynthesis; L-tryptophan biosynthesis; L-tryptophan from chorismate: step 2/5. In terms of biological role, catalyzes the transfer of the phosphoribosyl group of 5-phosphorylribose-1-pyrophosphate (PRPP) to anthranilate to yield N-(5'-phosphoribosyl)-anthranilate (PRA). In Lachnoclostridium phytofermentans (strain ATCC 700394 / DSM 18823 / ISDg) (Clostridium phytofermentans), this protein is Anthranilate phosphoribosyltransferase.